The sequence spans 189 residues: uncharacterized protein (189 aa).

The protein to M.jannaschii MJ1461.

This is an uncharacterized protein from Methanocaldococcus jannaschii (strain ATCC 43067 / DSM 2661 / JAL-1 / JCM 10045 / NBRC 100440) (Methanococcus jannaschii).